A 245-amino-acid polypeptide reads, in one-letter code: E3 ubiquitin-protein ligase RNF138 (245 aa).

A2 bears the N-acetylalanine mark. The RING-type zinc-finger motif lies at 18–58 (CPVCQEVLKTPVRTTACQHVFCRKCFLTAMRESGAHCPLCR). Residues C86, C89, H101, and C105 each coordinate Zn(2+). The C2HC RNF-type zinc finger occupies 86–105 (CRCCAKQIKFYRMRHHYKSC). A disordered region spans residues 125–154 (QDSVGNSNRSETSTSDNTETYQENTSSSGH). Residue T142 is modified to Phosphothreonine. 2 consecutive C2H2-type zinc fingers follow at residues 157 to 180 (FKCPLCQESNFTRQRLLDHCNSNH) and 187 to 215 (VTCPICVSLPWGDPSQITRNFVSHLNQRH). The 19-residue stretch at 225–243 (LQLDEETQYQTAVEESFQV) folds into the UIM domain.

In terms of assembly, interacts with NLK. Interacts with XRCC5/Ku80. Interacts with RBBP8/CtIP. Post-translationally, auto-ubiquitinated.

It is found in the chromosome. It catalyses the reaction S-ubiquitinyl-[E2 ubiquitin-conjugating enzyme]-L-cysteine + [acceptor protein]-L-lysine = [E2 ubiquitin-conjugating enzyme]-L-cysteine + N(6)-ubiquitinyl-[acceptor protein]-L-lysine.. It functions in the pathway protein modification; protein ubiquitination. Its function is as follows. E3 ubiquitin-protein ligase involved in DNA damage response by promoting DNA resection and homologous recombination. Recruited to sites of double-strand breaks following DNA damage and specifically promotes double-strand break repair via homologous recombination. Two different, non-exclusive, mechanisms have been proposed. According to a report, regulates the choice of double-strand break repair by favoring homologous recombination over non-homologous end joining (NHEJ): acts by mediating ubiquitination of XRCC5/Ku80, leading to remove the Ku complex from DNA breaks, thereby promoting homologous recombination. According to another report, cooperates with UBE2Ds E2 ubiquitin ligases (UBE2D1, UBE2D2, UBE2D3 or UBE2D4) to promote homologous recombination by mediating ubiquitination of RBBP8/CtIP. Together with NLK, involved in the ubiquitination and degradation of TCF/LEF. Also exhibits auto-ubiquitination activity in combination with UBE2K. May act as a negative regulator in the Wnt/beta-catenin-mediated signaling pathway. The protein is E3 ubiquitin-protein ligase RNF138 of Homo sapiens (Human).